The primary structure comprises 828 residues: Periplasmic nitrate reductase (828 aa).

The tat-type signal signal peptide spans 1–31 (MKLSRRSFMKANAVAAAAAAAGLSVPGVARA). The 4Fe-4S Mo/W bis-MGD-type domain occupies 39-95 (IKWDKAPCRFCGTGCGVLVGTQQGRVVACQGDPDAPVNRGLNCIKGYFLPKIMYGKD). [4Fe-4S] cluster contacts are provided by Cys-46, Cys-49, Cys-53, and Cys-81. Residues Lys-83, Gln-150, Asn-175, Cys-179, 212–219 (WGSNMAEM), 243–247 (STFQH), 262–264 (QSD), Met-372, Gln-376, Asn-482, 508–509 (SD), Lys-531, Asp-558, and 718–727 (TGRVLEHWHT) contribute to the Mo-bis(molybdopterin guanine dinucleotide) site. Substrate is bound at residue Phe-794. Residues Asn-802 and Lys-819 each coordinate Mo-bis(molybdopterin guanine dinucleotide).

This sequence belongs to the prokaryotic molybdopterin-containing oxidoreductase family. NasA/NapA/NarB subfamily. As to quaternary structure, component of the periplasmic nitrate reductase NapAB complex composed of NapA and NapB. [4Fe-4S] cluster is required as a cofactor. It depends on Mo-bis(molybdopterin guanine dinucleotide) as a cofactor. Post-translationally, predicted to be exported by the Tat system. The position of the signal peptide cleavage has not been experimentally proven.

It is found in the periplasm. It carries out the reaction 2 Fe(II)-[cytochrome] + nitrate + 2 H(+) = 2 Fe(III)-[cytochrome] + nitrite + H2O. In terms of biological role, catalytic subunit of the periplasmic nitrate reductase complex NapAB. Receives electrons from NapB and catalyzes the reduction of nitrate to nitrite. The protein is Periplasmic nitrate reductase of Salmonella schwarzengrund (strain CVM19633).